We begin with the raw amino-acid sequence, 108 residues long: Urease subunit beta (108 aa).

This sequence belongs to the urease beta subunit family. In terms of assembly, heterotrimer of UreA (gamma), UreB (beta) and UreC (alpha) subunits. Three heterotrimers associate to form the active enzyme.

It is found in the cytoplasm. The enzyme catalyses urea + 2 H2O + H(+) = hydrogencarbonate + 2 NH4(+). Its pathway is nitrogen metabolism; urea degradation; CO(2) and NH(3) from urea (urease route): step 1/1. The protein is Urease subunit beta of Microcystis aeruginosa (strain NIES-843 / IAM M-2473).